We begin with the raw amino-acid sequence, 294 residues long: Probable porphobilinogen deaminase (294 aa).

C233 bears the S-(dipyrrolylmethanemethyl)cysteine mark.

The protein belongs to the HMBS family. The cofactor is dipyrromethane.

It catalyses the reaction 4 porphobilinogen + H2O = hydroxymethylbilane + 4 NH4(+). The protein operates within porphyrin-containing compound metabolism; protoporphyrin-IX biosynthesis; coproporphyrinogen-III from 5-aminolevulinate: step 2/4. Its function is as follows. Tetrapolymerization of the monopyrrole PBG into the hydroxymethylbilane pre-uroporphyrinogen in several discrete steps. This chain is Probable porphobilinogen deaminase, found in Sulfurisphaera tokodaii (strain DSM 16993 / JCM 10545 / NBRC 100140 / 7) (Sulfolobus tokodaii).